Here is a 406-residue protein sequence, read N- to C-terminus: Corticosteroid-binding globulin (406 aa).

Residues 1–22 (MLLTLYACLLWLSTSGLWTSQA) form the signal peptide. N-linked (GlcNAc...) asparagine glycosylation is found at Asn95, Asn119, and Asn223. Position 253 (Gln253) interacts with cortisol. Asn259 carries an N-linked (GlcNAc...) asparagine glycan. Cortisol-binding residues include Gln285 and Trp394.

This sequence belongs to the serpin family.

The protein localises to the secreted. Functionally, major transport protein for glucocorticoids and progestins in the blood of almost all vertebrate species. This Sus scrofa (Pig) protein is Corticosteroid-binding globulin (Serpina6).